We begin with the raw amino-acid sequence, 108 residues long: Replication initiation control protein YabA (108 aa).

Residues H82, C84, C98, and C101 each contribute to the Zn(2+) site.

Belongs to the YabA family. Homotetramer. Interacts with both DnaA and DnaN, acting as a bridge between these two proteins. Zn(2+) serves as cofactor.

The protein resides in the cytoplasm. It is found in the nucleoid. Functionally, involved in control of chromosome replication initiation. Inhibits the cooperative binding of DnaA to the oriC region, thus negatively regulating initiation of chromosome replication. Inhibits the ability of DnaA-ATP to form a helix on DNA; does not disassemble preformed DnaA-DNA helices. Decreases the residence time of DnaA on the chromosome at its binding sites (oriC, replication forks and promoter-binding sites). Tethers DnaA to the replication machinery via the DNA polymerase beta sliding clamp subunit (dnaN). Associates with oriC and other DnaA targets on the chromosome in a DnaA-dependent manner. This Streptococcus agalactiae serotype Ia (strain ATCC 27591 / A909 / CDC SS700) protein is Replication initiation control protein YabA.